The sequence spans 131 residues: Phosphomevalonate dehydratase small subunit (131 aa).

The active-site Proton acceptor is Ser-62.

The protein belongs to the AcnX type II small subunit family. Heterodimer composed of a large subunit (PMDh-L) and a small subunit (PMDh-S).

The enzyme catalyses (R)-5-phosphomevalonate = (2E)-3-methyl-5-phosphooxypent-2-enoate + H2O. It participates in isoprenoid biosynthesis; isopentenyl diphosphate biosynthesis via mevalonate pathway. Its function is as follows. Component of a hydro-lyase that catalyzes the dehydration of mevalonate 5-phosphate (MVA5P) to form trans-anhydromevalonate 5-phosphate (tAHMP). Involved in the archaeal mevalonate (MVA) pathway, which provides fundamental precursors for isoprenoid biosynthesis, such as isopentenyl diphosphate (IPP) and dimethylallyl diphosphate (DMAPP). The chain is Phosphomevalonate dehydratase small subunit from Methanothermobacter thermautotrophicus (strain ATCC 29096 / DSM 1053 / JCM 10044 / NBRC 100330 / Delta H) (Methanobacterium thermoautotrophicum).